The following is an 88-amino-acid chain: Centromere protein W (88 aa).

It belongs to the CENP-W/WIP1 family. In terms of assembly, heterodimer with CENPT; this dimer coassembles with CENPS-CENPX heterodimers at centromeres to form the tetrameric CENP-T-W-S-X complex, which is a subcomplex of the large constitutive centromere-associated network (CCAN, also known as the interphase centromere complex or ICEN). Interacts with NPM1. In terms of tissue distribution, highly expressed in ovary, liver, lung and pancreas and to a lower extent in breast and gastrointestinal tract cancers; such as those of the colon, rectum and stomach. Overexpressed in high grade breast invasive tumors. Expressed in many cancer cell types.

It is found in the nucleus. It localises to the chromosome. Its subcellular location is the centromere. The protein localises to the kinetochore. The protein resides in the nucleus matrix. It is found in the nucleolus. Functionally, component of the CENPA-NAC (nucleosome-associated) complex, a complex that plays a central role in assembly of kinetochore proteins, mitotic progression and chromosome segregation. The CENPA-NAC complex recruits the CENPA-CAD (nucleosome distal) complex and may be involved in incorporation of newly synthesized CENPA into centromeres. Part of a nucleosome-associated complex that binds specifically to histone H3-containing nucleosomes at the centromere, as opposed to nucleosomes containing CENPA. Component of the heterotetrameric CENP-T-W-S-X complex that binds and supercoils DNA, and plays an important role in kinetochore assembly. CENPW has a fundamental role in kinetochore assembly and function. It is one of the inner kinetochore proteins, with most further proteins binding downstream. Required for normal chromosome organization and normal progress through mitosis. The chain is Centromere protein W (CENPW) from Homo sapiens (Human).